The primary structure comprises 112 residues: Small ribosomal subunit protein uS17 (112 aa).

It belongs to the universal ribosomal protein uS17 family. As to quaternary structure, part of the 30S ribosomal subunit.

Its function is as follows. One of the primary rRNA binding proteins, it binds specifically to the 5'-end of 16S ribosomal RNA. The sequence is that of Small ribosomal subunit protein uS17 from Thermotoga neapolitana (strain ATCC 49049 / DSM 4359 / NBRC 107923 / NS-E).